The primary structure comprises 581 residues: Putative phospholipase B-like 3 (581 aa).

A signal peptide spans 1–16; it reads MKLLFFLFGLIFAVEQ. N-linked (GlcNAc...) asparagine glycosylation is found at N50, N82, N132, N169, N215, N309, N543, N546, and N560.

The protein belongs to the phospholipase B-like family.

It is found in the secreted. Putative phospholipase. The protein is Putative phospholipase B-like 3 of Caenorhabditis elegans.